The sequence spans 404 residues: Cysteine desulfurase IscS (404 aa).

Residues 75 to 76, Asn155, Gln183, and 203 to 205 each bind pyridoxal 5'-phosphate; these read AT and SGH. Residue Lys206 is modified to N6-(pyridoxal phosphate)lysine. A pyridoxal 5'-phosphate-binding site is contributed by Thr243. Cys328 serves as the catalytic Cysteine persulfide intermediate. Residue Cys328 participates in [2Fe-2S] cluster binding.

It belongs to the class-V pyridoxal-phosphate-dependent aminotransferase family. NifS/IscS subfamily. Homodimer. Forms a heterotetramer with IscU, interacts with other sulfur acceptors. The cofactor is pyridoxal 5'-phosphate.

It localises to the cytoplasm. It catalyses the reaction (sulfur carrier)-H + L-cysteine = (sulfur carrier)-SH + L-alanine. It participates in cofactor biosynthesis; iron-sulfur cluster biosynthesis. Master enzyme that delivers sulfur to a number of partners involved in Fe-S cluster assembly, tRNA modification or cofactor biosynthesis. Catalyzes the removal of elemental sulfur and selenium atoms from cysteine and selenocysteine to produce alanine. Functions as a sulfur delivery protein for Fe-S cluster synthesis onto IscU, an Fe-S scaffold assembly protein, as well as other S acceptor proteins. Also functions as a selenium delivery protein in the pathway for the biosynthesis of selenophosphate. The chain is Cysteine desulfurase IscS from Escherichia coli (strain K12 / DH10B).